The primary structure comprises 170 residues: Phosphopantetheine adenylyltransferase (170 aa).

Position 14 (T14) interacts with substrate. ATP is bound by residues 14-15 (TF) and H22. Substrate-binding residues include K46, L78, and R92. ATP contacts are provided by residues 93–95 (GLR), E103, and 128–134 (WLYISST).

It belongs to the bacterial CoaD family. Homohexamer. Mg(2+) is required as a cofactor.

It is found in the cytoplasm. It catalyses the reaction (R)-4'-phosphopantetheine + ATP + H(+) = 3'-dephospho-CoA + diphosphate. Its pathway is cofactor biosynthesis; coenzyme A biosynthesis; CoA from (R)-pantothenate: step 4/5. Its function is as follows. Reversibly transfers an adenylyl group from ATP to 4'-phosphopantetheine, yielding dephospho-CoA (dPCoA) and pyrophosphate. The polypeptide is Phosphopantetheine adenylyltransferase (Oleidesulfovibrio alaskensis (strain ATCC BAA-1058 / DSM 17464 / G20) (Desulfovibrio alaskensis)).